The chain runs to 224 residues: Aminopyrimidine aminohydrolase (224 aa).

A substrate-binding site is contributed by Asp44. The active-site Nucleophile is Cys135. Positions 139 and 165 each coordinate substrate. Glu207 (proton donor) is an active-site residue.

The protein belongs to the TenA family. As to quaternary structure, homotetramer.

It catalyses the reaction 4-amino-5-aminomethyl-2-methylpyrimidine + H2O = 4-amino-5-hydroxymethyl-2-methylpyrimidine + NH4(+). The enzyme catalyses thiamine + H2O = 5-(2-hydroxyethyl)-4-methylthiazole + 4-amino-5-hydroxymethyl-2-methylpyrimidine + H(+). It functions in the pathway cofactor biosynthesis; thiamine diphosphate biosynthesis. In terms of biological role, catalyzes an amino-pyrimidine hydrolysis reaction at the C5' of the pyrimidine moiety of thiamine compounds, a reaction that is part of a thiamine salvage pathway. Thus, catalyzes the conversion of 4-amino-5-aminomethyl-2-methylpyrimidine to 4-amino-5-hydroxymethyl-2-methylpyrimidine (HMP). To a lesser extent, is also able to catalyze the hydrolytic cleavage of thiamine; however, this thiaminase activity is unlikely to be physiologically relevant. Therefore, is involved in the regeneration of the thiamine pyrimidine from thiamine degraded products present in the environment, rather than in thiamine degradation. In Halalkalibacterium halodurans (strain ATCC BAA-125 / DSM 18197 / FERM 7344 / JCM 9153 / C-125) (Bacillus halodurans), this protein is Aminopyrimidine aminohydrolase.